The primary structure comprises 335 residues: Serpentine receptor class alpha-13 (335 aa).

The Extracellular portion of the chain corresponds to 1 to 25 (MAIISSVNRTCASESLLELYRSYKY). The chain crosses the membrane as a helical span at residues 26-46 (ILSTSFNIIIPIISLFFLVYA). Residues 47–61 (IKQLCAQSIIQYSTR) lie on the Cytoplasmic side of the membrane. Residues 62–82 (VLLITTILFAVCHQIAYFCFK) form a helical membrane-spanning segment. At 83-108 (ADLLYTMLFKLDQPCNLQHSSYDCRF) the chain is on the extracellular side. A helical membrane pass occupies residues 109–129 (ITIATTTSNCGMALVQLAMSI). Residues 130-146 (DRVFALKFNRVYYKLKS) lie on the Cytoplasmic side of the membrane. Residues 147 to 167 (IPGITLALITLSISFSMFFIL) traverse the membrane as a helical segment. The Extracellular portion of the chain corresponds to 168 to 192 (TIDDPLSGYVNHCGFYPTYSQDKFH). The helical transmembrane segment at 193-213 (IFLDVTLYLAVFNFVFDIGLM) threads the bilayer. Residues 214–243 (YYSYQEILWKRSYSFVNRFQSRISLKCTQA) lie on the Cytoplasmic side of the membrane. A helical transmembrane segment spans residues 244–264 (IFIISICQCISNVLYSGLLSL). The Extracellular segment spans residues 265-278 (LMKLGRYMSSADYN). A helical membrane pass occupies residues 279–299 (LSLSLAYTTPYSCLILPILIC). Residues 300 to 335 (KVLEYIKKQRTVGILSLRNQKQSMEGHMAMINSAWK) lie on the Cytoplasmic side of the membrane.

This sequence belongs to the nematode receptor-like protein sra family. As to expression, expressed in the AWA and AWC chemosensory neurons.

It is found in the membrane. Functionally, chemosensory receptor that negatively regulates RAS/MAPK signaling during vulva induction and the negative regulation of olfaction of volitile attractants. Required for the suppression of vulval induction in response to food starvation. Signaling acts through the GPA-5 G-alpha protein subunit. The protein is Serpentine receptor class alpha-13 (sra-13) of Caenorhabditis elegans.